A 363-amino-acid polypeptide reads, in one-letter code: Protein-arginine kinase (363 aa).

The Phosphagen kinase C-terminal domain maps to 24–254 (IVLSSRIRLA…AQLIEQERSA (231 aa)). ATP is bound by residues 27 to 31 (SSRIR), His-92, Arg-125, 176 to 180 (RASVM), and 207 to 212 (RGIYGE). An RDXXRA motif of the pArg binding pocket involved in allosteric regulation motif is present at residues 337 to 342 (RDIKRA).

The protein belongs to the ATP:guanido phosphotransferase family.

The enzyme catalyses L-arginyl-[protein] + ATP = N(omega)-phospho-L-arginyl-[protein] + ADP + H(+). With respect to regulation, appears to be allosterically activated by the binding of pArg-containing polypeptides to the pArg-binding pocket localized in the C-terminal domain of McsB. Catalyzes the specific phosphorylation of arginine residues in a large number of proteins. Is part of the bacterial stress response system. Protein arginine phosphorylation has a physiologically important role and is involved in the regulation of many critical cellular processes, such as protein homeostasis, motility, competence, and stringent and stress responses, by regulating gene expression and protein activity. The polypeptide is Protein-arginine kinase (Bacillus pumilus (strain SAFR-032)).